We begin with the raw amino-acid sequence, 253 residues long: Sulfate transporter CysZ (253 aa).

4 helical membrane passes run 27 to 47 (FVLL…YLAV), 71 to 91 (ILWP…FTVV), 150 to 170 (LFIL…WLLF), and 211 to 231 (IVYV…AAVA).

This sequence belongs to the CysZ family.

Its subcellular location is the cell inner membrane. Its function is as follows. High affinity, high specificity proton-dependent sulfate transporter, which mediates sulfate uptake. Provides the sulfur source for the cysteine synthesis pathway. The sequence is that of Sulfate transporter CysZ from Pseudomonas syringae pv. tomato (strain ATCC BAA-871 / DC3000).